A 228-amino-acid polypeptide reads, in one-letter code: Aquaporin Z 2 (228 aa).

A run of 2 helical transmembrane segments spans residues 9 to 29 (FFGT…AAAF) and 34 to 54 (IGFT…AYAV). The NPA 1 motif lies at 63–65 (NPA). The next 3 helical transmembrane spans lie at 82–102 (VPYV…LYVI), 129–149 (LVSA…VILG), and 158–178 (GFAP…SIPV). The NPA 2 signature appears at 184 to 186 (NPA). Residues 204–224 (WLFWLAPIVGGAAGAVIWKLF) traverse the membrane as a helical segment.

This sequence belongs to the MIP/aquaporin (TC 1.A.8) family. As to quaternary structure, homotetramer.

It is found in the cell inner membrane. The enzyme catalyses H2O(in) = H2O(out). Channel that permits osmotically driven movement of water in both directions. It is involved in the osmoregulation and in the maintenance of cell turgor during volume expansion in rapidly growing cells. It mediates rapid entry or exit of water in response to abrupt changes in osmolarity. The polypeptide is Aquaporin Z 2 (Agrobacterium fabrum (strain C58 / ATCC 33970) (Agrobacterium tumefaciens (strain C58))).